Consider the following 334-residue polypeptide: NAC domain-containing protein 66 (334 aa).

Residues 11–175 (VPPGFRFHPT…GWVVCRVFKK (165 aa)) enclose the NAC domain. A DNA-binding region spans residues 111 to 181 (IGMRKTLVFY…VFKKNNLCKN (71 aa)).

In terms of tissue distribution, mostly expressed in anthers. Also present in pollen, base of siliques and inflorescence stems.

It is found in the nucleus. Transcription activator of genes involved in biosynthesis of secondary walls. Together with NST1, required for the secondary cell wall thickening of the anther endocethium, which is necessary for anther dehiscence. May also regulate the secondary cell wall lignification of other tissues such as tracheary elements. The sequence is that of NAC domain-containing protein 66 (NAC066) from Arabidopsis thaliana (Mouse-ear cress).